The sequence spans 243 residues: MKLLALVALCAVGVASHRDKRQLSIGTISVSGAGGSTGCVVTGNVLYANGIRLRNLTSSEQSELATYQTEVEQYKTQLRNILSQRRENLRNRLMSQGRNQQQQSNDVSSQGGNDDGSIPKAPEKPSFCTAEDTTQYYFDGCMVQGNKVYVGGQYARDLSSDEISELQTFDTQQTAYQNAVQSQMQSQVQGLFGGSDFLSALFGGDRFNQQQQRQQPSSTTPASTSSTTLPPKPTVPQFCTAIF.

The first 16 residues, 1–16, serve as a signal peptide directing secretion; it reads MKLLALVALCAVGVAS. The N-linked (GlcNAc...) asparagine glycan is linked to asparagine 55. Disordered regions lie at residues 95–126 and 208–235; these read SQGR…EKPS and NQQQ…KPTV. 2 stretches are compositionally biased toward low complexity: residues 99–112 and 209–229; these read NQQQ…SQGG and QQQQ…STTL. The cysteines at positions 141 and 239 are disulfide-linked.

Belongs to the protease inhibitor I33 family.

Its subcellular location is the secreted. This is an uncharacterized protein from Caenorhabditis elegans.